We begin with the raw amino-acid sequence, 104 residues long: Large ribosomal subunit protein uL23 (104 aa).

It belongs to the universal ribosomal protein uL23 family. As to quaternary structure, part of the 50S ribosomal subunit. Contacts protein L29, and trigger factor when it is bound to the ribosome.

One of the early assembly proteins it binds 23S rRNA. One of the proteins that surrounds the polypeptide exit tunnel on the outside of the ribosome. Forms the main docking site for trigger factor binding to the ribosome. This Neisseria meningitidis serogroup B (strain ATCC BAA-335 / MC58) protein is Large ribosomal subunit protein uL23.